We begin with the raw amino-acid sequence, 144 residues long: Phospholipase A2 (144 aa).

The N-terminal stretch at 1–15 (MKFLVLAALLTAGTA) is a signal peptide. Residues 16 to 22 (ASGVSPT) constitute a propeptide, activation peptide. 7 cysteine pairs are disulfide-bonded: C33–C99, C49–C144, C51–C67, C66–C127, C73–C120, C83–C113, and C106–C118. Residues Y50, G52, and G54 each coordinate Ca(2+). The active site involves H70. Residue D71 participates in Ca(2+) binding. Residue D121 is part of the active site.

It belongs to the phospholipase A2 family. Monomer or homodimer. The cofactor is Ca(2+). Post-translationally, activated by trypsin cleavage in the duodenum. Can also be activated by thrombin or autocatalytically.

Its subcellular location is the secreted. The catalysed reaction is a 1,2-diacyl-sn-glycero-3-phosphocholine + H2O = a 1-acyl-sn-glycero-3-phosphocholine + a fatty acid + H(+). It carries out the reaction 1,2-ditetradecanoyl-sn-glycero-3-phosphocholine + H2O = 1-tetradecanoyl-sn-glycero-3-phosphocholine + tetradecanoate + H(+). It catalyses the reaction 1,2-dihexadecanoyl-sn-glycero-3-phosphocholine + H2O = 1-hexadecanoyl-sn-glycero-3-phosphocholine + hexadecanoate + H(+). The enzyme catalyses 1-hexadecanoyl-2-(9Z-octadecenoyl)-sn-glycero-3-phosphocholine + H2O = 1-hexadecanoyl-sn-glycero-3-phosphocholine + (9Z)-octadecenoate + H(+). The catalysed reaction is 1-hexadecanoyl-2-(5Z,8Z,11Z,14Z-eicosatetraenoyl)-sn-glycero-3-phosphocholine + H2O = 1-hexadecanoyl-sn-glycero-3-phosphocholine + (5Z,8Z,11Z,14Z)-eicosatetraenoate + H(+). It carries out the reaction 1-hexadecanoyl-2-(9Z-octadecenoyl)-sn-glycero-3-phospho-(1'-sn-glycerol) + H2O = 1-hexadecanoyl-sn-glycero-3-phospho-(1'-sn-glycerol) + (9Z)-octadecenoate + H(+). It catalyses the reaction N-hexadecanoyl-1,2-di-(9Z-octadecenoyl)-sn-glycero-3-phosphoethanolamine + H2O = N-hexadecanoyl-1-(9Z-octadecenoyl)-sn-glycero-3-phosphoethanolamine + (9Z)-octadecenoate + H(+). The enzyme catalyses 1-hexadecanoyl-2-(9Z,12Z-octadecadienoyl)-sn-glycero-3-phosphoethanolamine + H2O = 1-hexadecanoyl-sn-glycero-3-phosphoethanolamine + (9Z,12Z)-octadecadienoate + H(+). The catalysed reaction is N,1-dihexadecanoyl-2-(9Z,12Z-octadecadienoyl)-sn-glycero-3-phosphoethanolamine + H2O = N,1-dihexadecanoyl-sn-glycero-3-phosphoethanolamine + (9Z,12Z)-octadecadienoate + H(+). Secretory calcium-dependent phospholipase A2 that primarily targets dietary phospholipids in the intestinal tract. Hydrolyzes the ester bond of the fatty acyl group attached at sn-2 position of phospholipids (phospholipase A2 activity) with preference for phosphatidylethanolamines and phosphatidylglycerols over phosphatidylcholines. May play a role in the biosynthesis of N-acyl ethanolamines that regulate energy metabolism and inflammation in the intestinal tract. Hydrolyzes N-acyl phosphatidylethanolamines to N-acyl lysophosphatidylethanolamines, which are further cleaved by a lysophospholipase D to release N-acyl ethanolamines. May act in an autocrine and paracrine manner. Has anti-helminth activity in a process regulated by gut microbiota. Upon helminth infection of intestinal epithelia, directly affects phosphatidylethanolamine contents in the membrane of helminth larvae, likely controlling an array of phospholipid-mediated cellular processes such as membrane fusion and cell division while providing for better immune recognition, ultimately reducing larvae integrity and infectivity. The protein is Phospholipase A2 (PLA2G1B) of Oryctolagus cuniculus (Rabbit).